Here is an 831-residue protein sequence, read N- to C-terminus: Sodium/hydrogen exchanger 3 (831 aa).

Positions 1–28 are cleaved as a signal peptide; it reads MWHPALGPGWKPLLALALALTSLRGVRG. Topologically, residues 29–48 are extracellular; that stretch reads IEEEPNSGGSFQIVTFKWHH. Residues 49-71 form a helical membrane-spanning segment; the sequence is VQDPYIIALWILVASLAKIVFHL. The Cytoplasmic segment spans residues 72–79; that stretch reads SHKVTSVV. Residues 80-99 traverse the membrane as a helical segment; the sequence is PESALLIVLGLVLGGIVWAA. Topologically, residues 100 to 108 are extracellular; that stretch reads DHIASFTLT. A helical transmembrane segment spans residues 109–126; it reads PTLFFFYLLPPIVLDAGY. Residues 127–129 lie on the Cytoplasmic side of the membrane; that stretch reads FMP. A helical transmembrane segment spans residues 130–165; that stretch reads NRLFFGNLGTILLYAVIGTIWNAATTGLSLYGVFLS. A 1,2-diacyl-sn-glycero-3-phospho-(1D-myo-inositol) contacts are provided by glycine 135, glycine 138, and threonine 139. The Extracellular segment spans residues 166–178; it reads GLMGELKIGLLDF. A helical membrane pass occupies residues 179-200; it reads LLFGSLIAAVDPVAVLAVFEEV. The Cytoplasmic segment spans residues 201–202; it reads HV. Residues 203–234 form a helical membrane-spanning segment; sequence NEVLFIIVFGESLLNDAVTVVLYNVFESFVTL. At 235-241 the chain is on the extracellular side; it reads GGDAVTG. A helical membrane pass occupies residues 242–276; sequence VDCVKGIVSFFVVSLGGTLVGVIFAFLLSLVTRFT. Topologically, residues 277–278 are cytoplasmic; the sequence is KH. A helical transmembrane segment spans residues 279–301; it reads VRIIEPGFVFVISYLSYLTSEML. Over 302-303 the chain is Extracellular; it reads SL. Residues 304–320 traverse the membrane as a helical segment; the sequence is SAILAITFCGICCQKYV. Residues 321–327 are Cytoplasmic-facing; the sequence is KANISEQ. Residues 328–356 traverse the membrane as a helical segment; it reads SATTVRYTMKMLASGAETIIFMFLGISAV. The Extracellular segment spans residues 357 to 364; the sequence is DPVIWTWN. Residues 365–386 form a helical membrane-spanning segment; it reads TAFVLLTLVFISVYRAIGVVLQ. Residues 387 to 399 are Cytoplasmic-facing; sequence TWILNRYRMVQLE. Residue methionine 395 participates in a 1,2-diacyl-sn-glycero-3-phospho-(1D-myo-inositol) binding. The chain crosses the membrane as a helical span at residues 400-423; sequence TIDQVVMSYGGLRGAVAYALVVLL. The Extracellular segment spans residues 424-430; that stretch reads DEKKVKE. A helical transmembrane segment spans residues 431–464; it reads KNLFVSTTLIVVFFTVIFQGLTIKPLVQWLKVKR. Topologically, residues 465-831 are cytoplasmic; sequence SEQREPKLNE…QPASPESTHM (367 aa). A 1,2-diacyl-sn-glycero-3-phospho-(1D-myo-inositol) contacts are provided by glutamine 494, isoleucine 495, and histidine 497. Phosphoserine is present on residues serine 552 and serine 560. The interaction with EZR stretch occupies residues 573–587; that stretch reads RPSTVEASVSYFLRE. The tract at residues 588–665 is interaction with NHERF4; it reads NVSAVCLDMQ…RKRLESFKSA (78 aa). An interaction with AHCYL1 region spans residues 589–693; it reads VSAVCLDMQS…AQKRRNSSIP (105 aa). A phosphoserine mark is found at serine 590 and serine 605. The residue at position 661 (serine 661) is a Phosphoserine; by SGK1. A phosphoserine mark is found at serine 716, serine 807, and serine 810. A disordered region spans residues 808–831; the sequence is VDSFLQADGPEEQLQPASPESTHM. Positions 822-831 are enriched in polar residues; sequence QPASPESTHM.

It belongs to the monovalent cation:p,roton antiporter 1 (CPA1) transporter (TC 2.A.36) family. In terms of assembly, homodimer. Found in the forms of complex and dynamic macromolecular complexes. Binds NHERF1 and NHERF2. Interacts with NHERF4 and interactions decrease in response to elevated calcium ion levels. Interacts with PDZK1 (via C-terminal PDZ domain). Interacts with CHP1; this interaction increases trafficking and activity at the plasma membrane of SLC9A3. Interacts with CHP2 and SHANK2. Interacts with AHCYL1; the interaction is required for SLC9A3 activity. Interacts with EZR; interaction targets SLC9A3 to the apical membrane. Interacts with SNX27 (via PDZ domains); directs SLC9A3 membrane insertion from early endosomes to the plasma membrane. Post-translationally, phosphorylated by PRKACA at Ser-552 and Ser-605, which inhibits activity. Phosphorylation of Ser-605 is essential for cAMP-mediated inhibition of SLC9A3. Phosphorylation at Ser-661 by SGK1 is associated with increased abundance at the cell membrane. Phosphorylation at Ser-716 by CSNK2A1 regulates SLC9A3 activity through the formation of multiple signaling complexes. In terms of tissue distribution, most abundant in colon and small intestine, followed by kidney and stomach. In kidney, expressed in proximal tubules and outer medulla (at protein level).

It is found in the apical cell membrane. It localises to the cell membrane. The protein localises to the recycling endosome membrane. The protein resides in the early endosome membrane. The enzyme catalyses Na(+)(in) + H(+)(out) = Na(+)(out) + H(+)(in). Seems to switch between active and inactive modes in response to various stimuli. Activated directly or indirectly by membrane phosphatidylinositol (PIs). Regulated by a variety of auxiliary proteins, which facilitate the maturation, cell surface expression and function of the transporter. Inhibited specifically by the drug tenapanor. Functionally, plasma membrane Na(+)/H(+) antiporter. Exchanges intracellular H(+) ions for extracellular Na(+) in 1:1 stoichiometry, playing a key role in salt and fluid absorption and pH homeostasis. Major apical Na(+)/H(+) exchanger in kidney and intestine playing an important role in renal and intestine Na(+) absorption and blood pressure regulation. In Rattus norvegicus (Rat), this protein is Sodium/hydrogen exchanger 3 (Slc9a3).